The chain runs to 393 residues: Fructose-bisphosphate aldolase 4, cytosolic (393 aa).

Arginine 73 contacts substrate. Cysteine 207 bears the S-glutathionyl cysteine; transient; alternate mark. S-nitrosocysteine; transient; alternate is present on cysteine 207. Residue glutamate 217 is the Proton acceptor of the active site. Lysine 259 acts as the Schiff-base intermediate with dihydroxyacetone-P in catalysis. Substrate-binding positions include 301–303 (SGG) and arginine 333.

Belongs to the class I fructose-bisphosphate aldolase family. Homotetramer. In terms of processing, S-glutathionylated at Cys-207. S-nitrosylated at Cys-207. Highly expressed in flowers.

The protein localises to the cytoplasm. The protein resides in the cytosol. It catalyses the reaction beta-D-fructose 1,6-bisphosphate = D-glyceraldehyde 3-phosphate + dihydroxyacetone phosphate. The protein operates within carbohydrate degradation; glycolysis; D-glyceraldehyde 3-phosphate and glycerone phosphate from D-glucose: step 4/4. In terms of biological role, fructose-bisphosphate aldolase that plays a key role in glycolysis and gluconeogenesis. The chain is Fructose-bisphosphate aldolase 4, cytosolic from Arabidopsis thaliana (Mouse-ear cress).